Here is a 240-residue protein sequence, read N- to C-terminus: Tetraspanin-1 (240 aa).

At 1 to 9 (MQCFSFIKT) the chain is on the cytoplasmic side. The helical transmembrane segment at 10–30 (IMILFNLLIFLCGAALLAVGI) threads the bilayer. At 31–52 (WVSIDGASFLKIFGPLSSSAMQ) the chain is on the extracellular side. A helical membrane pass occupies residues 53 to 73 (FVNVGYFLIAAGAVVFALGFL). Over 74–88 (GCYGAQTESKCALMT) the chain is Cytoplasmic. Residues 89 to 109 (FFFILLLIFIAEVAAAVVALV) traverse the membrane as a helical segment. Topologically, residues 110–210 (YTTMAEHFLT…QQLLYDIRTN (101 aa)) are extracellular. Asparagine 154 carries an N-linked (GlcNAc...) asparagine glycan. A helical membrane pass occupies residues 211–231 (AVTVGGVAAGIGGLELAAMIV). Over 232-240 (SMYLYCNLQ) the chain is Cytoplasmic.

Belongs to the tetraspanin (TM4SF) family. In terms of assembly, interacts with SLC19A2. Interacts with NTRK1/TRKA.

The protein localises to the lysosome membrane. Structural component of specialized membrane microdomains known as tetraspanin-enriched microdomains (TERMs), which act as platforms for receptor clustering and signaling. Participates thereby in diverse biological functions such as cell signal transduction, adhesion, migration and protein trafficking. Regulates neuronal differentiation in response to NGF by facilitating NGF-mediated activation of NTRK1/TRKA receptor tyrosine kinase and subsequent downstream signaling pathways. Plays a role in the inhibition of TNFalpha-induced apoptosis. Mechanistically, inhibits the NF-kappa-B signaling pathway by blocking phosphorylation of CHUK. Also promotes the stability of the thiamine transporter 1/SLC19A2 in intestinal epithelial cells leading to an increase of thiamine uptake process. The chain is Tetraspanin-1 (TSPAN1) from Macaca fascicularis (Crab-eating macaque).